We begin with the raw amino-acid sequence, 394 residues long: Ribulose bisphosphate carboxylase large chain (394 aa).

Lys5 carries the post-translational modification N6,N6,N6-trimethyllysine. Substrate contacts are provided by Asn114 and Thr164. Residue Lys166 is the Proton acceptor of the active site. A substrate-binding site is contributed by Lys168. Mg(2+)-binding residues include Lys192, Asp194, and Glu195. Residue Lys192 is modified to N6-carboxylysine. His285 (proton acceptor) is an active-site residue. Substrate-binding residues include Arg286, His318, and Ser370.

The protein belongs to the RuBisCO large chain family. Type I subfamily. As to quaternary structure, heterohexadecamer of 8 large chains and 8 small chains. It depends on Mg(2+) as a cofactor.

The protein localises to the plastid. It localises to the chloroplast. It catalyses the reaction 2 (2R)-3-phosphoglycerate + 2 H(+) = D-ribulose 1,5-bisphosphate + CO2 + H2O. It carries out the reaction D-ribulose 1,5-bisphosphate + O2 = 2-phosphoglycolate + (2R)-3-phosphoglycerate + 2 H(+). RuBisCO catalyzes two reactions: the carboxylation of D-ribulose 1,5-bisphosphate, the primary event in carbon dioxide fixation, as well as the oxidative fragmentation of the pentose substrate in the photorespiration process. Both reactions occur simultaneously and in competition at the same active site. The chain is Ribulose bisphosphate carboxylase large chain (rbcL) from Barclaya longifolia (Orchid lily).